Here is an 85-residue protein sequence, read N- to C-terminus: Probable small nuclear ribonucleoprotein G (85 aa).

In terms of domain architecture, Sm spans 6–78; the sequence is QADPDLTKLL…ILLMEPLESM (73 aa).

The protein belongs to the snRNP Sm proteins family. Core component of the spliceosomal U1, U2, U4 and U5 small nuclear ribonucleoproteins (snRNPs), the building blocks of the spliceosome. Most spliceosomal snRNPs contain a common set of Sm proteins, SNRPB, SNRPD1, SNRPD2, SNRPD3, SNRPE, SNRPF and SNRPG that assemble in a heptameric protein ring on the Sm site of the small nuclear RNA to form the core snRNP. Component of the U1 snRNP. Component of the U4/U6-U5 tri-snRNP complex. Component of the U7 snRNP complex. Component of the U11/U12 snRNPs that are part of the U12-type spliceosome.

It localises to the cytoplasm. It is found in the cytosol. The protein resides in the nucleus. Plays a role in pre-mRNA splicing as a core component of the spliceosomal U1, U2, U4 and U5 small nuclear ribonucleoproteins (snRNPs), the building blocks of the spliceosome. Component of both the pre-catalytic spliceosome B complex and activated spliceosome C complexes. Is also a component of the minor U12 spliceosome. The chain is Probable small nuclear ribonucleoprotein G (snrpG) from Dictyostelium discoideum (Social amoeba).